The following is a 349-amino-acid chain: GDSL esterase/lipase At1g58525 (349 aa).

The signal sequence occupies residues 1 to 19 (MKLQILLLALVLIAVEANA). N-linked (GlcNAc...) asparagine glycosylation occurs at Asn-25. Ser-37 acts as the Nucleophile in catalysis. An N-linked (GlcNAc...) asparagine glycan is attached at Asn-316. Active-site residues include Asp-324 and His-327.

It belongs to the 'GDSL' lipolytic enzyme family.

Its subcellular location is the secreted. This chain is GDSL esterase/lipase At1g58525, found in Arabidopsis thaliana (Mouse-ear cress).